Reading from the N-terminus, the 826-residue chain is Beta-galactosidase 7 (826 aa).

The N-terminal stretch at 1 to 25 (MKMKHFTRLLSLFFILITSLSLAKS) is a signal peptide. The N-linked (GlcNAc...) asparagine glycan is linked to Asn154. Glu184 functions as the Proton donor in the catalytic mechanism. The Nucleophile role is filled by Glu253. Asn254, Asn351, Asn380, Asn491, Asn665, Asn706, Asn797, and Asn801 each carry an N-linked (GlcNAc...) asparagine glycan. One can recognise an SUEL-type lectin domain in the interval 740–826 (AHEHNKVELS…PKKLAVELEC (87 aa)).

Belongs to the glycosyl hydrolase 35 family. As to expression, expressed in flowers.

It is found in the secreted. The protein localises to the extracellular space. Its subcellular location is the apoplast. The catalysed reaction is Hydrolysis of terminal non-reducing beta-D-galactose residues in beta-D-galactosides.. In Arabidopsis thaliana (Mouse-ear cress), this protein is Beta-galactosidase 7 (BGAL7).